The sequence spans 232 residues: Large ribosomal subunit protein uL1 (232 aa).

This sequence belongs to the universal ribosomal protein uL1 family. In terms of assembly, part of the 50S ribosomal subunit.

Binds directly to 23S rRNA. The L1 stalk is quite mobile in the ribosome, and is involved in E site tRNA release. Its function is as follows. Protein L1 is also a translational repressor protein, it controls the translation of the L11 operon by binding to its mRNA. The protein is Large ribosomal subunit protein uL1 of Paraburkholderia phytofirmans (strain DSM 17436 / LMG 22146 / PsJN) (Burkholderia phytofirmans).